A 189-amino-acid polypeptide reads, in one-letter code: Calcium and integrin-binding family member 2 (189 aa).

EF-hand domains lie at 68–103 (RENP…FSEQ), 105–140 (PRDI…MTKN), and 146–181 (EHQQ…APDF). Ca(2+) contacts are provided by aspartate 118, aspartate 120, aspartate 122, aspartate 129, aspartate 159, aspartate 161, aspartate 163, lysine 165, and glutamate 170.

Monomer. Homodimer.

It localises to the cytoplasm. Its function is as follows. Calcium- and integrin-binding protein. Plays a role in intracellular calcium homeostasis. Critical for proper photoreceptor cell maintenance and function. Required for prevention of light-dependent retinal degeneration. This is Calcium and integrin-binding family member 2 from Drosophila melanogaster (Fruit fly).